Reading from the N-terminus, the 526-residue chain is Peptide chain release factor 3 (526 aa).

Residues 8-277 (NKRRTFAIIS…GLTQWAPAPQ (270 aa)) enclose the tr-type G domain. GTP is bound by residues 17–24 (SHPDAGKT), 85–89 (DTPGH), and 139–142 (NKLD).

Belongs to the TRAFAC class translation factor GTPase superfamily. Classic translation factor GTPase family. PrfC subfamily.

The protein resides in the cytoplasm. Increases the formation of ribosomal termination complexes and stimulates activities of RF-1 and RF-2. It binds guanine nucleotides and has strong preference for UGA stop codons. It may interact directly with the ribosome. The stimulation of RF-1 and RF-2 is significantly reduced by GTP and GDP, but not by GMP. This is Peptide chain release factor 3 from Histophilus somni (strain 129Pt) (Haemophilus somnus).